Reading from the N-terminus, the 441-residue chain is Putative collagenous domain-containing protein R238 (441 aa).

Residues 164–199 (GCKGEKGIKGELGPKGNTGQKGDIGSKGDRGDKGEP) form the Collagen-like domain. Residues 171–198 (IKGELGPKGNTGQKGDIGSKGDRGDKGE) form a disordered region. The segment covering 187–198 (IGSKGDRGDKGE) has biased composition (basic and acidic residues).

In Acanthamoeba polyphaga (Amoeba), this protein is Putative collagenous domain-containing protein R238.